We begin with the raw amino-acid sequence, 56 residues long: Genome polyprotein (56 aa).

The interval 1–30 (ETMLDRIASGDLESSVDDPRSAEDKRFESH) is disordered. Residues 17–30 (DDPRSAEDKRFESH) are compositionally biased toward basic and acidic residues.

Belongs to the picornaviridae polyprotein family. Homopentamer. Homooligomer. As to quaternary structure, interacts with capsid protein VP2. Interacts with capsid protein VP3. Specific enzymatic cleavages by viral protease in vivo yield a variety of precursors and mature proteins. Polyprotein processing intermediates are produced, such as P1-2A which is a functional precursor of the structural proteins, VP0 which is a VP4-VP2 precursor, VP1-2A precursor, 3ABC precursor which is a stable and catalytically active precursor of 3A, 3B and 3C proteins, 3AB and 3CD precursors. The assembly signal 2A is removed from VP1-2A by a host protease, possibly host Cathepsin L. This cleavage occurs over a region of 3 amino-acids probably generating VP1 proteins with heterogeneous C-termini. Post-translationally, the assembly signal 2A is removed from VP1-2A by a host protease, possibly host Cathepsin L in naked virions. This cleavage does not occur in enveloped virions. This cleavage occurs over a region of 3 amino-acids probably generating VP1 proteins with heterogeneous C-termini.

The protein localises to the virion. It is found in the host endosome. It localises to the host multivesicular body. Capsid proteins VP1, VP2, and VP3 form a closed capsid enclosing the viral positive strand RNA genome. All these proteins contain a beta-sheet structure called beta-barrel jelly roll. Together they form an icosahedral capsid (T=3) composed of 60 copies of each VP1, VP2, and VP3, with a diameter of approximately 300 Angstroms. VP1 is situated at the 12 fivefold axes, whereas VP2 and VP3 are located at the quasi-sixfold axes. The naked capsid interacts with the host receptor HAVCR1 to provide virion attachment to and probably entry into the target cell. In terms of biological role, precursor component of immature procapsids that corresponds to an extended form of the structural protein VP1. After maturation, possibly by the host Cathepsin L, the assembly signal 2A is cleaved to give rise to the mature VP1 protein. This chain is Genome polyprotein, found in Callithrix (Owl-faced monkey).